A 231-amino-acid polypeptide reads, in one-letter code: Type 3 secretion system stator protein (231 aa).

In terms of assembly, the core secretion machinery of the T3SS is composed of approximately 20 different proteins, including cytoplasmic components, a base, an export apparatus and a needle. This subunit is part of the cytosolic complex. Interacts directly with Spa47/SctN (T3SS ATPase) and Spa33/SctQ (the major sorting platform component). Homodimer in solution.

It localises to the cytoplasm. In terms of biological role, component of the type III secretion system (T3SS), also called injectisome, which is used to inject bacterial effector proteins into eukaryotic host cells. Acts as a regulator of the Spa47/SctN ATPase activity. It down-regulates the ATPase activity of the oligomeric Spa47/SctN, while it up-regulates the activity of the monomeric form. Important for translocation of MxiH/SctF, the major needle component. The protein is Type 3 secretion system stator protein of Shigella flexneri.